Reading from the N-terminus, the 316-residue chain is Acetyl-coenzyme A carboxylase carboxyl transferase subunit alpha (316 aa).

The 255-residue stretch at 36 to 290 folds into the CoA carboxyltransferase C-terminal domain; sequence KLEQKLDSLK…KQFLVEQLHI (255 aa).

Belongs to the AccA family. As to quaternary structure, acetyl-CoA carboxylase is a heterohexamer composed of biotin carboxyl carrier protein (AccB), biotin carboxylase (AccC) and two subunits each of ACCase subunit alpha (AccA) and ACCase subunit beta (AccD).

Its subcellular location is the cytoplasm. The enzyme catalyses N(6)-carboxybiotinyl-L-lysyl-[protein] + acetyl-CoA = N(6)-biotinyl-L-lysyl-[protein] + malonyl-CoA. It functions in the pathway lipid metabolism; malonyl-CoA biosynthesis; malonyl-CoA from acetyl-CoA: step 1/1. In terms of biological role, component of the acetyl coenzyme A carboxylase (ACC) complex. First, biotin carboxylase catalyzes the carboxylation of biotin on its carrier protein (BCCP) and then the CO(2) group is transferred by the carboxyltransferase to acetyl-CoA to form malonyl-CoA. The chain is Acetyl-coenzyme A carboxylase carboxyl transferase subunit alpha from Protochlamydia amoebophila (strain UWE25).